The following is a 321-amino-acid chain: PI-PLC X domain-containing protein 3 (321 aa).

The region spanning 22-197 (SIHSIPLTNL…DYQVLVFYHS (176 aa)) is the PI-PLC X-box domain. Catalysis depends on residues His-37 and His-114.

In terms of tissue distribution, widely expressed, with highest levels in brain, followed by heart atrium. Not detected in small intestine, nor stomach.

The protein resides in the cytoplasm. The protein is PI-PLC X domain-containing protein 3 (Plcxd3) of Mus musculus (Mouse).